The primary structure comprises 179 residues: dCTP deaminase (179 aa).

Residues 101–106 (RSTLAR) and Asp117 each bind dCTP. Glu127 serves as the catalytic Proton donor/acceptor. Gln165 contributes to the dCTP binding site.

This sequence belongs to the dCTP deaminase family. As to quaternary structure, homotrimer.

It carries out the reaction dCTP + H2O + H(+) = dUTP + NH4(+). It functions in the pathway pyrimidine metabolism; dUMP biosynthesis; dUMP from dCTP (dUTP route): step 1/2. In terms of biological role, catalyzes the deamination of dCTP to dUTP. In Caldivirga maquilingensis (strain ATCC 700844 / DSM 13496 / JCM 10307 / IC-167), this protein is dCTP deaminase.